A 265-amino-acid polypeptide reads, in one-letter code: Leucine-rich repeat-containing protein Bf66946 (265 aa).

The N-terminal stretch at 1–20 (MALRDIFLLSMAMTAVTVQA) is a signal peptide. Cystine bridges form between C21–C27 and C25–C39. Positions 21–50 (CPSACKCTVSLYGEMVVACGGMGLTEIPED) constitute an LRRNT domain. 3 LRR repeats span residues 51 to 75 (IPHR…SFKG), 76 to 99 (LRNL…ALRH), and 100 to 123 (LGHL…LFDF). N-linked (GlcNAc...) asparagine glycosylation occurs at N64. The LRRCT domain occupies 142–193 (NPWGCDCRMAWLAQELAGGSKTFGDRHMECATPAALAGRGLSEIPQTSFVCT). Disulfide bonds link C146/C171 and C148/C192. A helical membrane pass occupies residues 220–240 (VAVVFGCITGLVTILLLVLTA).

It is found in the cell membrane. Its function is as follows. Binds selectively to the Gram-positive bacteria S.aureus and S.pneumoniae. Does not adhere to the Gram-negative bacteria E.coli and S.enterica. Probably recognizes peptidoglycans expressed on the bacterial cell surface. The protein is Leucine-rich repeat-containing protein Bf66946 of Branchiostoma floridae (Florida lancelet).